The primary structure comprises 382 residues: D-galactonate dehydratase 1 (382 aa).

D183 contributes to the Mg(2+) binding site. The active-site Proton donor is the H185. Mg(2+)-binding residues include E209 and E235. The Proton acceptor role is filled by H285.

It belongs to the mandelate racemase/muconate lactonizing enzyme family. GalD subfamily. Mg(2+) serves as cofactor.

The catalysed reaction is D-galactonate = 2-dehydro-3-deoxy-D-galactonate + H2O. Its pathway is carbohydrate acid metabolism; D-galactonate degradation; D-glyceraldehyde 3-phosphate and pyruvate from D-galactonate: step 1/3. Functionally, catalyzes the dehydration of D-galactonate to 2-keto-3-deoxy-D-galactonate. The protein is D-galactonate dehydratase 1 of Escherichia coli (strain SMS-3-5 / SECEC).